Consider the following 289-residue polypeptide: Xyloglucan endotransglucosylase/hydrolase protein 15 (289 aa).

An N-terminal signal peptide occupies residues 1-25 (MGPSSSLTTIVATVLLVTLFGSAYA). The GH16 domain occupies 26–216 (SNFFDEFDLT…WSKAPFTAYY (191 aa)). The active-site Nucleophile is the Glu-102. The active-site Proton donor is Glu-106. Glu-106 lines the xyloglucan pocket. Asn-110 carries an N-linked (GlcNAc...) asparagine glycan. Xyloglucan contacts are provided by residues 119–121 (HTN), 129–131 (DRE), 195–196 (DW), and Gly-200. Intrachain disulfides connect Cys-224–Cys-230 and Cys-270–Cys-284. Position 275 (Arg-275) interacts with xyloglucan.

Belongs to the glycosyl hydrolase 16 family. XTH group 2 subfamily. In terms of processing, contains at least one intrachain disulfide bond essential for its enzymatic activity. Strongly expressed in roots, hypocotyls and cotyledons. Aslo detected in inflorescence stems and in the carpels and styles in flowers.

It localises to the secreted. The protein resides in the cell wall. Its subcellular location is the extracellular space. The protein localises to the apoplast. The catalysed reaction is breaks a beta-(1-&gt;4) bond in the backbone of a xyloglucan and transfers the xyloglucanyl segment on to O-4 of the non-reducing terminal glucose residue of an acceptor, which can be a xyloglucan or an oligosaccharide of xyloglucan.. It catalyses the reaction xyloglucan + H2O = xyloglucan oligosaccharides.. Its function is as follows. Catalyzes xyloglucan endohydrolysis (XEH) and/or endotransglycosylation (XET). Cleaves and religates xyloglucan polymers, an essential constituent of the primary cell wall, and thereby participates in cell wall construction of growing tissues. Has a high XET activity, but little or no XEH activity in vitro. Acceptor preferences are XXXGol &gt; XLLGol = XLFGol &gt; XXLGol &gt; XXFGol. This is Xyloglucan endotransglucosylase/hydrolase protein 15 from Arabidopsis thaliana (Mouse-ear cress).